Consider the following 483-residue polypeptide: ATP synthase subunit beta (483 aa).

Position 162 to 169 (162 to 169 (GGAGVGKT)) interacts with ATP.

Belongs to the ATPase alpha/beta chains family. F-type ATPases have 2 components, CF(1) - the catalytic core - and CF(0) - the membrane proton channel. CF(1) has five subunits: alpha(3), beta(3), gamma(1), delta(1), epsilon(1). CF(0) has four main subunits: a(1), b(1), b'(1) and c(9-12).

The protein localises to the cellular thylakoid membrane. The catalysed reaction is ATP + H2O + 4 H(+)(in) = ADP + phosphate + 5 H(+)(out). Its function is as follows. Produces ATP from ADP in the presence of a proton gradient across the membrane. The catalytic sites are hosted primarily by the beta subunits. The chain is ATP synthase subunit beta from Prochloron didemni.